The following is a 455-amino-acid chain: Eukaryotic translation initiation factor 3 subunit E (455 aa).

The PCI domain occupies 256 to 425; sequence TDLFFSPAYI…GTVIMNHPPQ (170 aa).

The protein belongs to the eIF-3 subunit E family. As to quaternary structure, component of the eukaryotic translation initiation factor 3 (eIF-3) complex.

The protein resides in the cytoplasm. Its function is as follows. Component of the eukaryotic translation initiation factor 3 (eIF-3) complex, which is involved in protein synthesis of a specialized repertoire of mRNAs and, together with other initiation factors, stimulates binding of mRNA and methionyl-tRNAi to the 40S ribosome. The eIF-3 complex specifically targets and initiates translation of a subset of mRNAs involved in cell proliferation. This chain is Eukaryotic translation initiation factor 3 subunit E (int6), found in Neosartorya fischeri (strain ATCC 1020 / DSM 3700 / CBS 544.65 / FGSC A1164 / JCM 1740 / NRRL 181 / WB 181) (Aspergillus fischerianus).